The sequence spans 231 residues: Sporulation protein RMD6 (231 aa).

It is found in the peroxisome. Required for sporulation. Required for meiotic nuclear division. This chain is Sporulation protein RMD6 (RMD6), found in Saccharomyces cerevisiae (strain ATCC 204508 / S288c) (Baker's yeast).